The primary structure comprises 377 residues: Queuine tRNA-ribosyltransferase (377 aa).

The Proton acceptor role is filled by aspartate 89. Substrate contacts are provided by residues 89–93, aspartate 143, glutamine 188, and glycine 215; that span reads DSGGF. Residues 246–252 are RNA binding; sequence GVGKPED. Aspartate 265 serves as the catalytic Nucleophile. Residues 270 to 274 are RNA binding; important for wobble base 34 recognition; sequence TRNAR. Zn(2+) contacts are provided by cysteine 303, cysteine 305, cysteine 308, and histidine 334.

This sequence belongs to the queuine tRNA-ribosyltransferase family. In terms of assembly, homodimer. Within each dimer, one monomer is responsible for RNA recognition and catalysis, while the other monomer binds to the replacement base PreQ1. Zn(2+) is required as a cofactor.

The catalysed reaction is 7-aminomethyl-7-carbaguanine + guanosine(34) in tRNA = 7-aminomethyl-7-carbaguanosine(34) in tRNA + guanine. It functions in the pathway tRNA modification; tRNA-queuosine biosynthesis. Catalyzes the base-exchange of a guanine (G) residue with the queuine precursor 7-aminomethyl-7-deazaguanine (PreQ1) at position 34 (anticodon wobble position) in tRNAs with GU(N) anticodons (tRNA-Asp, -Asn, -His and -Tyr). Catalysis occurs through a double-displacement mechanism. The nucleophile active site attacks the C1' of nucleotide 34 to detach the guanine base from the RNA, forming a covalent enzyme-RNA intermediate. The proton acceptor active site deprotonates the incoming PreQ1, allowing a nucleophilic attack on the C1' of the ribose to form the product. After dissociation, two additional enzymatic reactions on the tRNA convert PreQ1 to queuine (Q), resulting in the hypermodified nucleoside queuosine (7-(((4,5-cis-dihydroxy-2-cyclopenten-1-yl)amino)methyl)-7-deazaguanosine). In Acinetobacter baumannii (strain ACICU), this protein is Queuine tRNA-ribosyltransferase.